The chain runs to 193 residues: ATP synthase subunit b (193 aa).

Residues 35-55 (IPMMLATFIAFVIVFLLLFFF) form a helical membrane-spanning segment.

The protein belongs to the ATPase B chain family. In terms of assembly, F-type ATPases have 2 components, F(1) - the catalytic core - and F(0) - the membrane proton channel. F(1) has five subunits: alpha(3), beta(3), gamma(1), delta(1), epsilon(1). F(0) has three main subunits: a(1), b(2) and c(10-14). The alpha and beta chains form an alternating ring which encloses part of the gamma chain. F(1) is attached to F(0) by a central stalk formed by the gamma and epsilon chains, while a peripheral stalk is formed by the delta and b chains.

It is found in the cell membrane. F(1)F(0) ATP synthase produces ATP from ADP in the presence of a proton or sodium gradient. F-type ATPases consist of two structural domains, F(1) containing the extramembraneous catalytic core and F(0) containing the membrane proton channel, linked together by a central stalk and a peripheral stalk. During catalysis, ATP synthesis in the catalytic domain of F(1) is coupled via a rotary mechanism of the central stalk subunits to proton translocation. Its function is as follows. Component of the F(0) channel, it forms part of the peripheral stalk, linking F(1) to F(0). The sequence is that of ATP synthase subunit b from Mycoplasmopsis synoviae (strain 53) (Mycoplasma synoviae).